Reading from the N-terminus, the 412-residue chain is Peptidase T (412 aa).

H84 contacts Zn(2+). D86 is an active-site residue. Zn(2+) is bound at residue D146. The Proton acceptor role is filled by E179. Zn(2+) contacts are provided by E180, D202, and H385.

The protein belongs to the peptidase M20B family. It depends on Zn(2+) as a cofactor.

Its subcellular location is the cytoplasm. It carries out the reaction Release of the N-terminal residue from a tripeptide.. Its function is as follows. Cleaves the N-terminal amino acid of tripeptides. This chain is Peptidase T, found in Pasteurella multocida (strain Pm70).